The chain runs to 927 residues: DNA polymerase alpha-binding protein (927 aa).

WD repeat units follow at residues 10–49, 134–173, 227–266, and 273–313; these read FDFGGKTLVSLAPDNNTLCVANKNGLTKILKTNNPEEEPE, KIDEQVSQISYNSQMNILAVSMINGKVQIFSLTSTIPNKV, AANRICTRVAWHPKGLHFALPCADDTVKIFSIKGYSLQKT, and STKA…IHYT. 3 positions are modified to phosphoserine: S377, S379, and S398. Residues T401 and T411 each carry the phosphothreonine modification. S463 is subject to Phosphoserine. A WD 5 repeat occupies 699 to 739; it reads GSDNTLLLLSKWRSPEESKWLPILDSNMEIWKMSGGKETTD.

The protein resides in the nucleus. Its function is as follows. Accessory factor for DNA replication. It plays a role in accurately duplicating the genome in vivo. The chain is DNA polymerase alpha-binding protein (CTF4) from Saccharomyces cerevisiae (strain ATCC 204508 / S288c) (Baker's yeast).